The sequence spans 577 residues: Arginine--tRNA ligase (577 aa).

The short motif at 122-132 (PNVAKEMHVGH) is the 'HIGH' region element.

It belongs to the class-I aminoacyl-tRNA synthetase family. As to quaternary structure, monomer.

It is found in the cytoplasm. It carries out the reaction tRNA(Arg) + L-arginine + ATP = L-arginyl-tRNA(Arg) + AMP + diphosphate. The chain is Arginine--tRNA ligase from Aliivibrio salmonicida (strain LFI1238) (Vibrio salmonicida (strain LFI1238)).